A 301-amino-acid polypeptide reads, in one-letter code: GTP cyclohydrolase FolE2 (301 aa).

The protein belongs to the GTP cyclohydrolase IV family.

It catalyses the reaction GTP + H2O = 7,8-dihydroneopterin 3'-triphosphate + formate + H(+). The protein operates within cofactor biosynthesis; 7,8-dihydroneopterin triphosphate biosynthesis; 7,8-dihydroneopterin triphosphate from GTP: step 1/1. Its function is as follows. Converts GTP to 7,8-dihydroneopterin triphosphate. The protein is GTP cyclohydrolase FolE2 of Pseudomonas syringae pv. syringae (strain B728a).